A 354-amino-acid chain; its full sequence is MNTLFMHCRPGFEGEVCAEISEHAARLGVAGYAKGKPQSASAEFVCSEEGGAERLMGELRFNQLIFPRQWARGGYVELPERDRISVLLAQLADFPVFGSLWLEVLDSNEGKELSTFCRKFEVPLRKALEKAGRLVDDPGRPRLLLTFISGRRVFVGVASASNSALWPMGIPRLKFPREAPSRSTLKLEEAWHQFIPREQWEQRLGDDMTGVDLGASPGGWTYQLVRRGMLVTAIDNGPMAESLMDTGLVQHLMADGFTWQPKQPVDWMVCDIVEKPARTTSLIETWLGEGLCREAVVNLKLPMKQRYAEVRRLLDRMEATFKARKIRVSIACKQLYHDREEVTCHLRRLDLKPR.

S-adenosyl-L-methionine contacts are provided by residues serine 183, 216 to 219, aspartate 235, aspartate 255, and aspartate 271; that span reads SPGG. Lysine 300 serves as the catalytic Proton acceptor.

This sequence belongs to the class I-like SAM-binding methyltransferase superfamily. RNA methyltransferase RlmE family. RlmM subfamily. In terms of assembly, monomer.

It is found in the cytoplasm. The catalysed reaction is cytidine(2498) in 23S rRNA + S-adenosyl-L-methionine = 2'-O-methylcytidine(2498) in 23S rRNA + S-adenosyl-L-homocysteine + H(+). Functionally, catalyzes the 2'-O-methylation at nucleotide C2498 in 23S rRNA. In Pseudomonas putida (strain ATCC 47054 / DSM 6125 / CFBP 8728 / NCIMB 11950 / KT2440), this protein is Ribosomal RNA large subunit methyltransferase M.